A 284-amino-acid polypeptide reads, in one-letter code: RNase adapter protein RapZ (284 aa).

8–15 provides a ligand contact to ATP; it reads GRSGSGKS. 56–59 is a GTP binding site; sequence DVRN. Positions 266–284 are RNA-binding; the sequence is RSRGKNVQSRHRTLEKRKS.

This sequence belongs to the RapZ-like family. RapZ subfamily. Homotrimer.

Modulates the synthesis of GlmS, by affecting the processing and stability of the regulatory small RNA GlmZ. When glucosamine-6-phosphate (GlcN6P) concentrations are high in the cell, RapZ binds GlmZ and targets it to cleavage by RNase E. Consequently, GlmZ is inactivated and unable to activate GlmS synthesis. Under low GlcN6P concentrations, RapZ is sequestered and inactivated by an other regulatory small RNA, GlmY, preventing GlmZ degradation and leading to synthesis of GlmS. This is RNase adapter protein RapZ from Klebsiella oxytoca.